The sequence spans 160 residues: MHSAKNRFVQAVQRLQDFRNMYDYEARLATFADWPFTENCKCTPENMAKAGFVHCPTENEPDVACCFFCLKELEGWEPDDDPWTEHSKRSASCGFLSLTKCVNDLTMEGFLRLEADRIKSFYRKFSTVVLQYVEEEMTATTKRLLEYFSNQHQCSIDLDR.

One copy of the BIR repeat lies at 27–97; it reads RLATFADWPF…KRSASCGFLS (71 aa). Thr-43 bears the Phosphothreonine; by CDK1 mark. Cys-66, Cys-69, His-86, and Cys-93 together coordinate Zn(2+).

The protein belongs to the IAP family. Component of the CPC at least composed of survivin/birc5, incenp, cdca8/borealin and/or cdca9/dasra-A, and aurkb/aurora-B. Interacts directly with incenp (via N-terminus), and may weakly interact with aurkb (via N-terminus) to stabilize the complex. Interacts with GTP-bound ran in both the S and M phases of the cell cycle. Also found in a complex with ubiquitin-mediated signaling proteins including at least usp9x/xFAM, nploc4/npl4 and ufd1. Ubiquitination is required for centrosome-targeting.

The protein localises to the cytoplasm. It localises to the nucleus. The protein resides in the chromosome. Its subcellular location is the centromere. It is found in the cytoskeleton. The protein localises to the spindle. In terms of biological role, component of the chromosomal passenger complex (CPC), a complex that acts as a key regulator of mitosis. The CPC complex has essential functions at the centromere in ensuring correct chromosome alignment and segregation and is required for chromatin-induced microtubule stabilization and spindle assembly. Stimulates the mitotic kinase activity of aurkb/aurora-B in the CPC. Does not appear to exhibit anti-apoptotic activity. The sequence is that of Baculoviral IAP repeat-containing protein 5.1 (birc5.1) from Xenopus tropicalis (Western clawed frog).